A 663-amino-acid polypeptide reads, in one-letter code: MGVYRVCVSTGASIYAGSKNKVELWLVGQHGEVELGSCLRPTRNKEEEFKVNVSKYLGSLLFVRLRKKHFLKEDAWFCNWISVQALGAAEDKYWFPCYRWVVGDGVQSLPVGTGCTTVGDPQGLFQKHREQELEERRKLYQWGSWKEGLILNVAGSKLTDLPVDERFLEDKKIDFEASLAWGLAELALKNSLNILAPWKTLDDFNRIFWCGRSKLARRVRDSWQEDSLFGYQFLNGANPMLLRRSVQLPARLVFPPGMEELQAQLEKELKAGTLFEADFALLDNIKANVILYCQQYLAAPLVMLKLQPDGKLMPMVIQLHLPKIGSSPPPLFLPTDPPMVWLLAKCWVRSSDFQVHELNSHLLRGHLMAEVFTVATMRCLPSIHPVFKLIVPHLRYTLEINVRARNGLVSDFGIFDQIMSTGGGGHVQLLQQAGAFLTYRSFCPPDDLADRGLLGVESSFYAQDALRLWEIISRYVQGIMGLYYKTDEAVRDDLELQSWCREITEIGLQGAQKQGFPTSLQSVAQACHFVTMCIFTCTGQHSSIHLGQLDWFTWVPNAPCTMRLPPPTTKDATLETVMATLPNLHQSSLQMSIVWQLGRDQPIMVPLGQHQEEYFSGPEPRAVLEKFREELAIMDKEIEVRNEKLDIPYEYLRPSIVENSVAI.

The region spanning 2 to 115 (GVYRVCVSTG…VQSLPVGTGC (114 aa)) is the PLAT domain. The region spanning 116-663 (TTVGDPQGLF…PSIVENSVAI (548 aa)) is the Lipoxygenase domain. Fe cation contacts are provided by His-361, His-366, His-541, His-545, and Ile-663.

Belongs to the lipoxygenase family. Interacts with PEBP1; in response to IL13/interleukin-13, prevents the interaction of PEBP1 with RAF1 to activate the ERK signaling cascade. It depends on Fe cation as a cofactor. In terms of tissue distribution, detected in reticulocytes (at protein level).

It is found in the cytoplasm. It localises to the cytosol. The protein resides in the cell membrane. The protein localises to the lipid droplet. It carries out the reaction (5Z,8Z,11Z,14Z)-eicosatetraenoate + O2 = (12S)-hydroperoxy-(5Z,8Z,10E,14Z)-eicosatetraenoate. It catalyses the reaction (5Z,8Z,11Z,14Z)-eicosatetraenoate + O2 = (15S)-hydroperoxy-(5Z,8Z,11Z,13E)-eicosatetraenoate. The enzyme catalyses (9Z,12Z)-octadecadienoate + O2 = (13S)-hydroperoxy-(9Z,11E)-octadecadienoate. The catalysed reaction is (5Z,8Z,11Z,14Z)-eicosatetraenoate + 2 O2 = (14R,15S)-dihydroperoxy-(5Z,8Z,10E,12E)-eicosatetraenoate. It carries out the reaction (5Z,8Z,11Z,14Z)-eicosatetraenoate + 2 O2 = (8S,15S)-dihydroperoxy-(5Z,9E,11Z,13E)-eicosatetraenoate. It catalyses the reaction (14S,15R)-epoxy-(5Z,8Z,11Z)-eicosatrienoate + O2 = (8S)-hydroperoxy-(14S,15R)-epoxy-(5Z,9E,11Z)-eicosatrienoate. The enzyme catalyses (14S,15R)-epoxy-(5Z,8Z,11Z)-eicosatrienoate + O2 = (12S)-hydroperoxy-(14S,15R)-epoxy-(5Z,8Z,10E)-eicosatrienoate. The catalysed reaction is (14R,15S)-epoxy-(5Z,8Z,11Z)-eicosatrienoate + O2 = (5S)-hydroperoxy-(14R,15S)-epoxy-(6E,8Z,11Z)-eicosatrienoate. It carries out the reaction (14R,15S)-epoxy-(5Z,8Z,11Z)-eicosatrienoate + O2 = (12S)-hydroperoxy-(14R,15S)-epoxy-(5Z,8Z,10E)-eicosatrienoate. It catalyses the reaction (15R)-hydroperoxy-(5Z,8Z,11Z,13E)-eicosatetraenoate = 15-oxo-(5Z,8Z,11Z,13E)-eicosatetraenoate + H2O. The enzyme catalyses (15S)-hydroperoxy-(5Z,8Z,11Z,13E)-eicosatetraenoate = (14S,15S)-epoxy-(5Z,8Z,10E,12E)-eicosatetraenoate + H2O. The catalysed reaction is (12S)-hydroperoxy-(5Z,8Z,10E,14Z)-eicosatetraenoate = (8S)-hydroxy-(11S,12S)-epoxy-(5Z,9E,14Z)-eicosatrienoate. It carries out the reaction (4Z,7Z,10Z,13Z,16Z)-docosapentaenoate + O2 = 14-hydroperoxy-(4Z,7Z,10Z,12E,16Z)-docosapentaenoate. It catalyses the reaction (7Z,10Z,13Z,16Z,19Z)-docosapentaenoate + O2 = 14-hydroperoxy-(7Z,10Z,12E,16Z,19Z)-docosapentaenoate. The enzyme catalyses (4Z,7Z,10Z,13Z,16Z,19Z)-docosahexaenoate + O2 = (14S)-hydroperoxy-(4Z,7Z,10Z,12E,16Z,19Z)-docosahexaenoate. The catalysed reaction is (4Z,7Z,10Z,13Z,16Z,19Z)-docosahexaenoate + O2 = (17S)-hydroperoxy-(4Z,7Z,10Z,13Z,15E,19Z)-docosahexaenoate. It carries out the reaction (7S)-hydroperoxy-(4Z,8E,10Z,13Z,16Z,19Z)-docosahexaenoate + O2 = (7S,14S)-dihydroperoxy-(4Z,8E,10Z,12E,16Z,19Z)-docosahexaenoate. It catalyses the reaction (7S)-hydroperoxy-(4Z,8E,10Z,13Z,16Z,19Z)-docosahexaenoate + O2 = (7S,17S)-dihydroperoxy-(4Z,8E,10Z,13Z,15E,19Z)-docosahexaenoate. The enzyme catalyses (4Z,7Z,10Z,13Z,16Z,19Z)-docosahexaenoate + O2 = (11S)-hydroperoxy-(4Z,7Z,9E,13Z,16Z,19Z)-docosahexaenoate. The catalysed reaction is N-(5Z,8Z,11Z,14Z)-eicosatetraenoyl-taurine + O2 = N-(15S)-hydroperoxy-(5Z,8Z,11Z,13E)-eicosatetraenoyl-taurine. It carries out the reaction N-(5Z,8Z,11Z,14Z)-eicosatetraenoyl-gamma-aminobutanoate + O2 = N-(15S)-hydroperoxy-(5Z,8Z,11Z,13E)-eicosatetraenoyl-gamma-aminobutanoate. It catalyses the reaction N-(5Z,8Z,11Z,14Z)-eicosatetraenoyl-glycine + O2 = N-(15S)-hydroperoxy-(5Z,8Z,11Z,13E)-eicosatetraenoyl-glycine. The enzyme catalyses N-(5Z,8Z,11Z,14Z)-eicosatetraenoyl-L-alanine + O2 = N-(15S)-hydroperoxy-(5Z,8Z,11Z,13E)-eicosatetraenoyl-alanine. The catalysed reaction is N-(5Z,8Z,11Z,14Z)-eicosatetraenoyl-taurine + O2 = N-(12S)-hydroperoxy-(5Z,8Z,10E,14Z)-eicosatetraenoyl-taurine. It carries out the reaction N-(5Z,8Z,11Z,14Z)-eicosatetraenoyl-gamma-aminobutanoate + O2 = N-(12S)-hydroperoxy-(5Z,8Z,10E,14Z)-eicosatetraenoyl-gamma-aminobutanoate. It catalyses the reaction N-(5Z,8Z,11Z,14Z)-eicosatetraenoyl-glycine + O2 = N-(12S)-hydroperoxy-(5Z,8Z,10E,14Z)-eicosatetraenoyl-glycine. The enzyme catalyses N-(5Z,8Z,11Z,14Z)-eicosatetraenoyl-L-alanine + O2 = N-(12S)-hydroperoxy-(5Z,8Z,10E,14Z)-eicosatetraenoyl-alanine. The protein operates within lipid metabolism; hydroperoxy eicosatetraenoic acid biosynthesis. Functionally, non-heme iron-containing dioxygenase that catalyzes the stereo-specific peroxidation of free and esterified polyunsaturated fatty acids generating a spectrum of bioactive lipid mediators. It inserts peroxyl groups at C12 or C15 of arachidonate ((5Z,8Z,11Z,14Z)-eicosatetraenoate) producing both 12-hydroperoxyeicosatetraenoate/12-HPETE and 15-hydroperoxyeicosatetraenoate/15-HPETE. It may then act on 12-HPETE to produce hepoxilins, which may show pro-inflammatory properties. Can also peroxidize linoleate ((9Z,12Z)-octadecadienoate) to 13-hydroperoxyoctadecadienoate. May participate in the sequential oxidations of DHA ((4Z,7Z,10Z,13Z,16Z,19Z)-docosahexaenoate) to generate specialized pro-resolving mediators (SPMs)like resolvin D5 ((7S,17S)-diHPDHA) and (7S,14S)-diHPDHA, that actively down-regulate the immune response and have anti-aggregation properties with platelets. Can convert epoxy fatty acids to hydroperoxy-epoxides derivatives followed by an intramolecular nucleophilic substitution leading to the formation of monocyclic endoperoxides. Plays an important role during the maintenance of self-tolerance by peroxidizing membrane-bound phosphatidylethanolamine which can then signal the sorting process for clearance of apoptotic cells during inflammation and prevent an autoimmune response. In addition to its role in the immune and inflammatory responses, this enzyme may play a role in epithelial wound healing in the cornea through production of lipoxin A4 (LXA(4)) and docosahexaenoic acid-derived neuroprotectin D1 (NPD1; 10R,17S-HDHA), both lipid autacoids exhibit anti-inflammatory and neuroprotective properties. Furthermore, it may regulate actin polymerization which is crucial for several biological processes such as the phagocytosis of apoptotic cells. It is also implicated in the generation of endogenous ligands for peroxisome proliferator activated receptor (PPAR-gamma), hence modulating macrophage development and function. It may also exert a negative effect on skeletal development by regulating bone mass through this pathway. As well as participates in ER stress and downstream inflammation in adipocytes, pancreatic islets, and liver. Finally, it is also involved in the cellular response to IL13/interleukin-13. This Oryctolagus cuniculus (Rabbit) protein is Polyunsaturated fatty acid lipoxygenase ALOX15.